A 259-amino-acid polypeptide reads, in one-letter code: tRNA (guanine-N(1)-)-methyltransferase (259 aa).

S-adenosyl-L-methionine is bound by residues glycine 117 and 137-142; that span reads LGDFVL.

The protein belongs to the RNA methyltransferase TrmD family. As to quaternary structure, homodimer.

Its subcellular location is the cytoplasm. It catalyses the reaction guanosine(37) in tRNA + S-adenosyl-L-methionine = N(1)-methylguanosine(37) in tRNA + S-adenosyl-L-homocysteine + H(+). Specifically methylates guanosine-37 in various tRNAs. This chain is tRNA (guanine-N(1)-)-methyltransferase, found in Polaromonas sp. (strain JS666 / ATCC BAA-500).